The sequence spans 481 residues: MELRKSQVAMPVFLAIMSLMVSQVVFAEKDSGSMSPHDRALAEMQALKASLVRRNLPALVSPPPTPPQAVPGPRVYQVISYGADPTGKLDSTDAILKAMEEAFDGPNHGVLMQGINDLGGARIDLQGGSYLISRPLRFPSAGAGNLLISGGTLRASNDFPVDRYLIELKDESSKLQYIFEYITLRDLLIDCNYRGGAIAVINSLRTSIDNCYITRFGDTNGILVKSGHETYIRNSFLGQHITAGGDRGERSFSGTAINLMGNDNAVTDTVIFSARIGVMVSGQANLLSGVHCYNKATGFGGTGIYLRLPGLTQNRIVNSYLDYTGIVAEDPVQLQISGTFFLGDAFILLKSIAGYIRGVSIVDNMFSGSGHGVQIVQLDQRNTAFDDVGQVVVDRNSVNGMVEKSTVARGSVDGNGTSWTVDFNPVLLFPDLINHVQYTLVASEAGVFPLHALRNVSDNRVVVETNAPVTGTVYVTVNQGV.

An N-terminal signal peptide occupies residues 1–27 (MELRKSQVAMPVFLAIMSLMVSQVVFA). 3 PbH1 repeats span residues 203–226 (SLRTSIDNCYITRFGDTNGILVKS), 261–282 (GNDNAVTDTVIFSARIGVMVSG), and 356–377 (IRGVSIVDNMFSGSGHGVQIVQ). Residues asparagine 415 and asparagine 455 are each glycosylated (N-linked (GlcNAc...) asparagine).

It belongs to the glycosyl hydrolase 28 family. Expressed in the tapetum cells in the anthers and in the ovules of open flowers.

It is found in the secreted. The protein localises to the cell wall. It catalyses the reaction (1,4-alpha-D-galacturonosyl)n+m + H2O = (1,4-alpha-D-galacturonosyl)n + (1,4-alpha-D-galacturonosyl)m.. Its function is as follows. Polygalacturonase required for degrading the pollen mother cell wall during microspore development. The sequence is that of Polygalacturonase QRT3 (QRT3) from Arabidopsis thaliana (Mouse-ear cress).